A 282-amino-acid polypeptide reads, in one-letter code: Bifunctional protein FolD (282 aa).

NADP(+) contacts are provided by residues 164–166 (GRS) and serine 189.

This sequence belongs to the tetrahydrofolate dehydrogenase/cyclohydrolase family. Homodimer.

It catalyses the reaction (6R)-5,10-methylene-5,6,7,8-tetrahydrofolate + NADP(+) = (6R)-5,10-methenyltetrahydrofolate + NADPH. The enzyme catalyses (6R)-5,10-methenyltetrahydrofolate + H2O = (6R)-10-formyltetrahydrofolate + H(+). It participates in one-carbon metabolism; tetrahydrofolate interconversion. Its function is as follows. Catalyzes the oxidation of 5,10-methylenetetrahydrofolate to 5,10-methenyltetrahydrofolate and then the hydrolysis of 5,10-methenyltetrahydrofolate to 10-formyltetrahydrofolate. The protein is Bifunctional protein FolD of Lachnoclostridium phytofermentans (strain ATCC 700394 / DSM 18823 / ISDg) (Clostridium phytofermentans).